The primary structure comprises 191 residues: Small ribosomal subunit protein uS5 (191 aa).

The tract at residues 1–21 (MAAERERGGRERSREREERDS) is disordered. The 64-residue stretch at 23-86 (FVDKLVHINR…ESAKRNLTRV (64 aa)) folds into the S5 DRBM domain.

Part of the 30S ribosomal subunit. Contacts proteins S4 and S8.

Its function is as follows. With S4 and S12 plays an important role in translational accuracy. Located at the back of the 30S subunit body where it stabilizes the conformation of the head with respect to the body. The protein is Small ribosomal subunit protein uS5 of Rhodopseudomonas palustris (strain ATCC BAA-98 / CGA009).